Reading from the N-terminus, the 163-residue chain is MKELEKYSTCLKCIDEFSQNLGIKKKDRTIFKMKQSENENEKCLVLENGSFESPEPWFVIDENDEIHTLLSLQSLKNILESLKQSQKENFELRLEKAIYQQIPVDFNDVWTVAMDEIKQKAQNGTMEVSIDLEKLISKIKQEHPNLFVDMQAMIEKVNQNERL.

Belongs to the UPF0763 family.

This Campylobacter jejuni subsp. doylei (strain ATCC BAA-1458 / RM4099 / 269.97) protein is UPF0763 protein JJD26997_0796.